Consider the following 160-residue polypeptide: Complexin-4 (160 aa).

The interval 14-44 (KNLGFGGGSEEKKEEGGTSDPAAAKGMTREE) is disordered. A Cysteine methyl ester modification is found at Cys157. A lipid anchor (S-farnesyl cysteine) is attached at Cys157. Positions 158–160 (SVM) are cleaved as a propeptide — removed in mature form.

Belongs to the complexin/synaphin family. In terms of assembly, weakly binds to the SNARE core complex containing SNAP25, VAMP2 and STX1A. In terms of processing, farnesylation mediates presynaptic targeting and is important for function in neurotransmitter release. In terms of tissue distribution, present specifically in the retina (at protein level). Expressed in the outer nuclear layer of the retina (at protein level). Strongly expressed at rod photoreceptor ribbon synapses (at protein level). Not expressed at conventional amacrine cell synapses, nor at cone photoreceptor ribbon synapses (at protein level). Weakly expressed at cone photoreceptor synaptic terminals (at protein level). Not expressed in the brain (at protein level).

It localises to the synapse. Its subcellular location is the cell membrane. Complexin that regulates SNARE protein complex-mediated synaptic vesicle fusion. Required for the maintenance of synaptic ultrastructure in the adult retina. Positively regulates synaptic transmission through synaptic vesicle availability and exocytosis of neurotransmitters at photoreceptor ribbon synapses in the retina. Suppresses tonic photoreceptor activity and baseline 'noise' by suppression of Ca(2+) vesicle tonic release and the facilitation of evoked synchronous and asynchronous Ca(2+) vesicle release. The polypeptide is Complexin-4 (Cplx4) (Mus musculus (Mouse)).